A 181-amino-acid chain; its full sequence is Adenine phosphoribosyltransferase 2 (181 aa).

Serine 2 is subject to N-acetylserine.

The protein belongs to the purine/pyrimidine phosphoribosyltransferase family.

It localises to the cytoplasm. The enzyme catalyses AMP + diphosphate = 5-phospho-alpha-D-ribose 1-diphosphate + adenine. It participates in purine metabolism; AMP biosynthesis via salvage pathway; AMP from adenine: step 1/1. In terms of biological role, catalyzes a salvage reaction resulting in the formation of AMP, that is energically less costly than de novo synthesis. May lack catalytic activity. This Saccharomyces cerevisiae (strain ATCC 204508 / S288c) (Baker's yeast) protein is Adenine phosphoribosyltransferase 2 (APT2).